A 196-amino-acid chain; its full sequence is Pentatricopeptide repeat-containing protein At1g62350 (196 aa).

PPR repeat units follow at residues 70–104 and 105–139; these read DMFFYRDMLMMLARNKKVDETKKVWEDLKKEEVLF and DQHTFGDLVRGFLDNELPLEAMRLYGEMRESPDRP.

It belongs to the PPR family. P subfamily.

In Arabidopsis thaliana (Mouse-ear cress), this protein is Pentatricopeptide repeat-containing protein At1g62350.